A 357-amino-acid polypeptide reads, in one-letter code: Chorismate synthase (357 aa).

Residue arginine 47 participates in NADP(+) binding. Residues 123-125, glycine 281, 296-300, and arginine 324 each bind FMN; these read RAS and KPTSS.

Belongs to the chorismate synthase family. In terms of assembly, homotetramer. Requires FMNH2 as cofactor.

The enzyme catalyses 5-O-(1-carboxyvinyl)-3-phosphoshikimate = chorismate + phosphate. It participates in metabolic intermediate biosynthesis; chorismate biosynthesis; chorismate from D-erythrose 4-phosphate and phosphoenolpyruvate: step 7/7. Functionally, catalyzes the anti-1,4-elimination of the C-3 phosphate and the C-6 proR hydrogen from 5-enolpyruvylshikimate-3-phosphate (EPSP) to yield chorismate, which is the branch point compound that serves as the starting substrate for the three terminal pathways of aromatic amino acid biosynthesis. This reaction introduces a second double bond into the aromatic ring system. The sequence is that of Chorismate synthase from Chlamydia trachomatis serovar D (strain ATCC VR-885 / DSM 19411 / UW-3/Cx).